The sequence spans 659 residues: Delta(6)-protoilludene synthase (659 aa).

Aspartate 91, asparagine 227, serine 231, and glutamate 235 together coordinate Mg(2+). A DDXXD motif motif is present at residues 91 to 95 (DEHTD). (2E,6E)-farnesyl diphosphate contacts are provided by arginine 316 and tyrosine 317. The segment at 528 to 586 (PQFSKTSGAPNGAHTPTTTNGSIKSNGFVSGDTNGHANGNGHVQTRSSTPSSSSSSTSS) is disordered. Over residues 530–573 (FSKTSGAPNGAHTPTTTNGSIKSNGFVSGDTNGHANGNGHVQTR) the composition is skewed to polar residues. Low complexity predominate over residues 574 to 586 (SSTPSSSSSSTSS).

Belongs to the terpene synthase family. Requires Mg(2+) as cofactor.

It catalyses the reaction (2E,6E)-farnesyl diphosphate = Delta(6)-protoilludene + diphosphate. Its function is as follows. Terpene cyclase that catalyzes the cyclization of farnesyl diphosphate (FPP) to delta(6)-protoilludene. The protein is Delta(6)-protoilludene synthase of Cyclocybe aegerita (Black poplar mushroom).